A 335-amino-acid polypeptide reads, in one-letter code: Beta-ketoacyl-[acyl-carrier-protein] synthase III (335 aa).

Residues C119 and H261 contribute to the active site. The interval 262–266 (QANQR) is ACP-binding. Residue N291 is part of the active site.

It belongs to the thiolase-like superfamily. FabH family. In terms of assembly, homodimer.

The protein localises to the cytoplasm. It carries out the reaction malonyl-[ACP] + acetyl-CoA + H(+) = 3-oxobutanoyl-[ACP] + CO2 + CoA. The protein operates within lipid metabolism; fatty acid biosynthesis. Its function is as follows. Catalyzes the condensation reaction of fatty acid synthesis by the addition to an acyl acceptor of two carbons from malonyl-ACP. Catalyzes the first condensation reaction which initiates fatty acid synthesis and may therefore play a role in governing the total rate of fatty acid production. Possesses both acetoacetyl-ACP synthase and acetyl transacylase activities. Its substrate specificity determines the biosynthesis of branched-chain and/or straight-chain of fatty acids. This Prochlorococcus marinus (strain MIT 9215) protein is Beta-ketoacyl-[acyl-carrier-protein] synthase III.